Here is a 590-residue protein sequence, read N- to C-terminus: Oligoendopeptidase F homolog (590 aa).

Histidine 381 is a binding site for Zn(2+). Residue glutamate 382 is part of the active site. Positions 385 and 388 each coordinate Zn(2+).

Belongs to the peptidase M3B family. The cofactor is Zn(2+).

In Borreliella burgdorferi (strain ATCC 35210 / DSM 4680 / CIP 102532 / B31) (Borrelia burgdorferi), this protein is Oligoendopeptidase F homolog (pepF).